Here is a 313-residue protein sequence, read N- to C-terminus: DNA-directed RNA polymerase subunit alpha (313 aa).

The alpha N-terminal domain (alpha-NTD) stretch occupies residues 1 to 227 (MMLDVAPPRF…DFFGLFAEGY (227 aa)). The alpha C-terminal domain (alpha-CTD) stretch occupies residues 242-313 (RPVITDERPI…YGYTLESGRE (72 aa)).

Belongs to the RNA polymerase alpha chain family. As to quaternary structure, homodimer. The RNAP catalytic core consists of 2 alpha, 1 beta, 1 beta' and 1 omega subunit. When a sigma factor is associated with the core the holoenzyme is formed, which can initiate transcription.

It catalyses the reaction RNA(n) + a ribonucleoside 5'-triphosphate = RNA(n+1) + diphosphate. Its function is as follows. DNA-dependent RNA polymerase catalyzes the transcription of DNA into RNA using the four ribonucleoside triphosphates as substrates. This is DNA-directed RNA polymerase subunit alpha from Rubrobacter xylanophilus (strain DSM 9941 / JCM 11954 / NBRC 16129 / PRD-1).